The sequence spans 123 residues: Large ribosomal subunit protein bL19c (123 aa).

The protein belongs to the bacterial ribosomal protein bL19 family.

The protein localises to the plastid. It localises to the chloroplast. The chain is Large ribosomal subunit protein bL19c from Pyropia yezoensis (Susabi-nori).